The sequence spans 602 residues: ATP-dependent zinc metalloprotease FtsH 3 (602 aa).

At 1-18 (MNSWFLQVSKRLGPAGRR) the chain is on the cytoplasmic side. A helical membrane pass occupies residues 19-39 (LWLLGFMGVVLAVTLGLALRA). The Periplasmic segment spans residues 40–117 (ARESATQRTA…DFASREDPSR (78 aa)). A helical membrane pass occupies residues 118–138 (AASAVLPVVVLAAVGFALFTV). The Cytoplasmic portion of the chain corresponds to 139–602 (SRRRSPKVFS…RRPRPEDQAA (464 aa)). ATP is bound at residue 202 to 209 (GEPGTGKT). Position 425 (His425) interacts with Zn(2+). The active site involves Glu426. Residues His429 and Asp501 each coordinate Zn(2+).

It in the central section; belongs to the AAA ATPase family. In the C-terminal section; belongs to the peptidase M41 family. In terms of assembly, homohexamer. The cofactor is Zn(2+).

The protein localises to the cell inner membrane. Functionally, acts as a processive, ATP-dependent zinc metallopeptidase for both cytoplasmic and membrane proteins. Plays a role in the quality control of integral membrane proteins. This is ATP-dependent zinc metalloprotease FtsH 3 from Sorangium cellulosum (strain So ce56) (Polyangium cellulosum (strain So ce56)).